The sequence spans 85 residues: Large ribosomal subunit protein bL27 (85 aa).

Residues 1 to 22 (MAHKKGQGSTQNNRDSAGRRLG) are disordered.

Belongs to the bacterial ribosomal protein bL27 family.

This chain is Large ribosomal subunit protein bL27, found in Sulfurimonas denitrificans (strain ATCC 33889 / DSM 1251) (Thiomicrospira denitrificans (strain ATCC 33889 / DSM 1251)).